Reading from the N-terminus, the 475-residue chain is Ribosomal protein uS12 methylthiotransferase RimO (475 aa).

Residues 5 to 114 (RTVRLIRLGC…IAQRLEDVLA (110 aa)) enclose the MTTase N-terminal domain. [4Fe-4S] cluster-binding residues include Cys-14, Cys-49, Cys-78, Cys-174, Cys-178, and Cys-181. Residues 160-390 (LDDSPVAPLK…AGIAEEVTAD (231 aa)) form the Radical SAM core domain. Residues 393-461 (RARLGETVDV…GVDFLAAPVT (69 aa)) form the TRAM domain.

Belongs to the methylthiotransferase family. RimO subfamily. [4Fe-4S] cluster serves as cofactor.

It is found in the cytoplasm. The catalysed reaction is L-aspartate(89)-[ribosomal protein uS12]-hydrogen + (sulfur carrier)-SH + AH2 + 2 S-adenosyl-L-methionine = 3-methylsulfanyl-L-aspartate(89)-[ribosomal protein uS12]-hydrogen + (sulfur carrier)-H + 5'-deoxyadenosine + L-methionine + A + S-adenosyl-L-homocysteine + 2 H(+). In terms of biological role, catalyzes the methylthiolation of an aspartic acid residue of ribosomal protein uS12. In Acidothermus cellulolyticus (strain ATCC 43068 / DSM 8971 / 11B), this protein is Ribosomal protein uS12 methylthiotransferase RimO.